The following is a 476-amino-acid chain: RNA-binding protein 45 (476 aa).

Positions 1–14 (MDDAGGLGGSGGFR) are enriched in gly residues. The interval 1 to 20 (MDDAGGLGGSGGFRPGVDSL) is disordered. 2 RRM domains span residues 26-106 (SRIF…IAQS) and 121-192 (TRIF…LAEP). K34 participates in a covalent cross-link: Glycyl lysine isopeptide (Lys-Gly) (interchain with G-Cter in SUMO2). Residues 192–212 (PKNKVSGSPEQDDYSSGRQEA) are disordered. Residues 196-209 (VSGSPEQDDYSSGR) show a composition bias toward polar residues. Phosphoserine occurs at positions 199 and 464. Residues 392–464 (ERLFVVFNPH…VRLKVMLADS (73 aa)) form the RRM 3 domain.

The protein localises to the cytoplasm. It localises to the nucleus. In terms of biological role, RNA-binding protein with binding specificity for poly(C). May play an important role in neural development. The chain is RNA-binding protein 45 (Rbm45) from Mus musculus (Mouse).